Here is a 256-residue protein sequence, read N- to C-terminus: Nuclear shuttle protein (256 aa).

Residues 1 to 16 (MYSTSNRRGRSQTQRG) are compositionally biased toward polar residues. The interval 1 to 46 (MYSTSNRRGRSQTQRGSHVRRTGVKRSYGAARGDDRRRPNVVSKTQ) is disordered. The Bipartite nuclear localization signal signature appears at 21–42 (RTGVKRSYGAARGDDRRRPNVV). Positions 81–96 (SYVKTVPNRTRTYIKL) match the Nuclear localization signal motif. An interaction with Arabidopsis thaliana NSI protein region spans residues 150 to 187 (ELFGARIHCHGNLSVVPALKDRYYIRHVTKRVVSLEKD). A Nuclear export signal motif is present at residues 177–198 (VTKRVVSLEKDTLLIDLHGTTQ).

This sequence belongs to the begomovirus nuclear shuttle protein family. In terms of assembly, binds to single-stranded and double-stranded viral DNA. Interacts with the host nuclear shuttle interacting (NSI) protein. This interaction may allow NSP to recruit NSI monomers to the viral genome and thus regulate nuclear export of viral genome by NSP.

Its subcellular location is the host nucleus. The protein resides in the host cytoplasm. It is found in the host cell membrane. Its function is as follows. Binds to the genomic viral ssDNA, shuttles it into and out of the cell nucleus. Begomoviruses use 2 proteins to transport their DNA from cell to cell. The nuclear shuttle protein (NSP) shuttles it between nucleus and cytoplasm and the movement protein (MP) probably transports the DNA-NSP complex to the cell periphery and facilitates movement across the cell wall. This Squash leaf curl virus (SLCV) protein is Nuclear shuttle protein.